Here is a 906-residue protein sequence, read N- to C-terminus: Ankyrin repeat and MYND domain-containing protein 1 (906 aa).

3 MORN repeats span residues 16 to 38 (YHGQFYRDHFHGLGTYTWPDGSS), 39 to 59 (FTGTFYLSQREGYGTMHTKTM), and 61 to 83 (FQGLYKEDQRFGPGIETYPDGSQ). The stretch at 282–311 (KGYTVLAAAAMHSHLDIVNLLLDFGADVNK) is one ANK 1 repeat. Over residues 391-400 (SMQTPESSNM) the composition is skewed to polar residues. Residues 391-411 (SMQTPESSNMLHKEEVSPVKT) form a disordered region. 6 ANK repeats span residues 479-508 (VRKMAQSMVERRNRWMTITLLLRRGADPNL), 511-540 (VPMQALFLAVKAGDVEGVRLLLMSGAQTDI), 547-579 (QSLTPLHIAVSLPGEEGVKITELLLHVITNVDA), 623-657 (GGRTALHVACEREDNKKCARDIVRLLLSHRANPNV), 660-689 (SGHSPLSLAIASGNDLVVKELLSQGADPNL), and 701-732 (VVCDLVYEQQRSVENKIALIDRLISYGADVLN). Zn(2+) contacts are provided by Cys-845, Cys-848, Cys-859, Cys-862, Cys-868, Cys-872, His-881, and Cys-885. Residues 845 to 885 (CYQCGRSIGVRLSPCPRCYGILTCSKYCKTKAWIEFHKKDC) form an MYND-type zinc finger.

The sequence is that of Ankyrin repeat and MYND domain-containing protein 1 (Ankmy1) from Mus musculus (Mouse).